We begin with the raw amino-acid sequence, 642 residues long: Capsid vertex component 2 (642 aa).

An interaction with major capsid protein/MCP region spans residues 1–48 (MSLLHTFWRLPVAVFFEPHEENVLRCPERVLRRLLEDAAVTMRGGGWR). The disordered stretch occupies residues 97 to 125 (DEGPSPRTLLQPPCRPRSSSPGTGVAGAS).

Belongs to the herpesviridae CVC2 protein family. In terms of assembly, heterodimerizes with CVC1. Interacts with major capsid protein/MCP and triplex capsid protein 1/TRX1 at the pentamer vertices. Interacts with the large tegument protein/LTP.

It localises to the virion. The protein localises to the host nucleus. Capsid vertex-specific component that plays a role during viral DNA encapsidation, assuring correct genome cleavage and presumably stabilizing capsids that contain full-length viral genomes. Participates in the interaction between the capsid and the tegument through interaction with the large tegument protein/LTP. The chain is Capsid vertex component 2 from Homo sapiens (Human).